We begin with the raw amino-acid sequence, 566 residues long: Rho GTPase-activating protein gacH (566 aa).

Disordered regions lie at residues 1–56 (MSGV…SGAT), 65–84 (LLKQQQQPNHSITTNNNNNK), 128–168 (SEDE…SAHS), and 322–366 (KPQV…NSKN). A compositionally biased stretch (low complexity) spans 14-35 (SSTTATTTGSSKSSLNISKSVS). Over residues 36–56 (PTGNKAVSPMSSPNSLQSGAT) the composition is skewed to polar residues. Residues 65 to 83 (LLKQQQQPNHSITTNNNNN) are compositionally biased toward low complexity. The segment covering 130–141 (DEYEDDEDEDEN) has biased composition (acidic residues). The span at 142–160 (NNSVNNNSNNNSNNNNNNN) shows a compositional bias: low complexity. A compositionally biased stretch (polar residues) spans 327–337 (KSPQSSGSLST). A compositionally biased stretch (low complexity) spans 345–356 (SSSLQRSRSVSQ). The Rho-GAP domain occupies 369 to 564 (GSLDTILEKE…LLIENYNLFY (196 aa)).

The protein localises to the cytoplasm. Its function is as follows. Rho GTPase-activating protein involved in the signal transduction pathway. This Dictyostelium discoideum (Social amoeba) protein is Rho GTPase-activating protein gacH (gacH).